A 482-amino-acid polypeptide reads, in one-letter code: UDP-N-acetylmuramate--L-alanine ligase (482 aa).

129–135 contacts ATP; the sequence is GTHGKTT.

It belongs to the MurCDEF family.

It is found in the cytoplasm. It catalyses the reaction UDP-N-acetyl-alpha-D-muramate + L-alanine + ATP = UDP-N-acetyl-alpha-D-muramoyl-L-alanine + ADP + phosphate + H(+). It functions in the pathway cell wall biogenesis; peptidoglycan biosynthesis. In terms of biological role, cell wall formation. In Acinetobacter baumannii (strain AB307-0294), this protein is UDP-N-acetylmuramate--L-alanine ligase.